Consider the following 325-residue polypeptide: NADH-quinone oxidoreductase subunit H (325 aa).

8 helical membrane passes run 11-31, 81-101, 114-134, 154-174, 186-206, 237-257, 265-285, and 304-324; these read ILLT…CGAF, VIFT…FAIV, IGIL…LFAG, LSYE…AGSF, VWNV…GVAV, FFVG…TLFF, LPPF…FILI, and ICLP…LWQA.

This sequence belongs to the complex I subunit 1 family. In terms of assembly, NDH-1 is composed of 13 different subunits. Subunits NuoA, H, J, K, L, M, N constitute the membrane sector of the complex.

Its subcellular location is the cell inner membrane. It catalyses the reaction a quinone + NADH + 5 H(+)(in) = a quinol + NAD(+) + 4 H(+)(out). Functionally, NDH-1 shuttles electrons from NADH, via FMN and iron-sulfur (Fe-S) centers, to quinones in the respiratory chain. The immediate electron acceptor for the enzyme in this species is believed to be ubiquinone. Couples the redox reaction to proton translocation (for every two electrons transferred, four hydrogen ions are translocated across the cytoplasmic membrane), and thus conserves the redox energy in a proton gradient. This subunit may bind ubiquinone. In Escherichia coli O45:K1 (strain S88 / ExPEC), this protein is NADH-quinone oxidoreductase subunit H.